The sequence spans 247 residues: Chloride intracellular channel protein 2 (247 aa).

The segment at 1–94 (MSGLRPGTQV…KIEEFLEQTL (94 aa)) is N-terminal. The required for insertion into the membrane stretch occupies residues 1–96 (MSGLRPGTQV…EEFLEQTLAP (96 aa)). E25 serves as a coordination point for glutathione. Positions 30-33 (CPFC) match the G-site motif. Cysteines 30 and 33 form a disulfide. A helical transmembrane segment spans residues 32–52 (FCQRLFMILWLKGVKFNVTTV). Positions 76 to 239 (NKELKTDFIK…PEDKEIENTY (164 aa)) constitute a GST C-terminal domain. The tract at residues 95–106 (APPRYPHLSPKY) is joint loop. A C-terminal region spans residues 107–247 (KESFDVGCNL…TYANVAKQKS (141 aa)). Residues 151–171 (NTPLLDEIDPDSAEEPPVSRR) form a foot loop region. Residue H227 participates in glutathione binding.

The protein belongs to the chloride channel CLIC family. Monomer. Interacts with TRAPPC2 and RYR2. In terms of tissue distribution, expressed in adult and fetal brain, heart, skeletal muscle, liver, lung, and spleen. Detected in adult stomach and testis. Expressed in fetal thymus and kidney.

The protein localises to the cytoplasm. It is found in the membrane. The enzyme catalyses chloride(in) = chloride(out). It carries out the reaction tert-butyl hydroperoxide + 2 glutathione = tert-butanol + glutathione disulfide + H2O. The catalysed reaction is cumene hydroperoxide + 2 glutathione = 2-phenylpropan-2-ol + glutathione disulfide + H2O. The channel conductance is regulated by pH. Functionally, in the soluble state, catalyzes glutaredoxin-like thiol disulfide exchange reactions with reduced glutathione as electron donor. Displays weak glutathione peroxidase activity. Can insert into membranes and form chloride ion channels. Membrane insertion seems to be redox-regulated and may occur only under oxidizing conditions. Modulates the activity of RYR2 and inhibits calcium influx. In Homo sapiens (Human), this protein is Chloride intracellular channel protein 2.